The sequence spans 236 residues: Biosynthetic peptidoglycan transglycosylase (236 aa).

The helical transmembrane segment at A12–P31 threads the bilayer.

This sequence belongs to the glycosyltransferase 51 family.

The protein resides in the cell inner membrane. The enzyme catalyses [GlcNAc-(1-&gt;4)-Mur2Ac(oyl-L-Ala-gamma-D-Glu-L-Lys-D-Ala-D-Ala)](n)-di-trans,octa-cis-undecaprenyl diphosphate + beta-D-GlcNAc-(1-&gt;4)-Mur2Ac(oyl-L-Ala-gamma-D-Glu-L-Lys-D-Ala-D-Ala)-di-trans,octa-cis-undecaprenyl diphosphate = [GlcNAc-(1-&gt;4)-Mur2Ac(oyl-L-Ala-gamma-D-Glu-L-Lys-D-Ala-D-Ala)](n+1)-di-trans,octa-cis-undecaprenyl diphosphate + di-trans,octa-cis-undecaprenyl diphosphate + H(+). It participates in cell wall biogenesis; peptidoglycan biosynthesis. Its function is as follows. Peptidoglycan polymerase that catalyzes glycan chain elongation from lipid-linked precursors. This chain is Biosynthetic peptidoglycan transglycosylase, found in Pseudomonas entomophila (strain L48).